The chain runs to 424 residues: UDP-N-acetylglucosamine 1-carboxyvinyltransferase (424 aa).

K22–N23 is a phosphoenolpyruvate binding site. R93 is a UDP-N-acetyl-alpha-D-glucosamine binding site. Residue C117 is the Proton donor of the active site. The residue at position 117 (C117) is a 2-(S-cysteinyl)pyruvic acid O-phosphothioketal. UDP-N-acetyl-alpha-D-glucosamine is bound by residues R122 to L126, D307, and V329.

It belongs to the EPSP synthase family. MurA subfamily.

The protein resides in the cytoplasm. It carries out the reaction phosphoenolpyruvate + UDP-N-acetyl-alpha-D-glucosamine = UDP-N-acetyl-3-O-(1-carboxyvinyl)-alpha-D-glucosamine + phosphate. It participates in cell wall biogenesis; peptidoglycan biosynthesis. In terms of biological role, cell wall formation. Adds enolpyruvyl to UDP-N-acetylglucosamine. This chain is UDP-N-acetylglucosamine 1-carboxyvinyltransferase, found in Chlorobium luteolum (strain DSM 273 / BCRC 81028 / 2530) (Pelodictyon luteolum).